Reading from the N-terminus, the 135-residue chain is S-adenosylmethionine decarboxylase proenzyme (135 aa).

Residue serine 64 is the Schiff-base intermediate with substrate; via pyruvic acid of the active site. Position 64 is a pyruvic acid (Ser); by autocatalysis (serine 64). The active-site Proton acceptor; for processing activity is the histidine 69. The active-site Proton donor; for catalytic activity is the cysteine 84.

Belongs to the prokaryotic AdoMetDC family. Type 1 subfamily. As to quaternary structure, heterotetramer of two alpha and two beta chains arranged as a dimer of alpha/beta heterodimers. Pyruvate is required as a cofactor. In terms of processing, is synthesized initially as an inactive proenzyme. Formation of the active enzyme involves a self-maturation process in which the active site pyruvoyl group is generated from an internal serine residue via an autocatalytic post-translational modification. Two non-identical subunits are generated from the proenzyme in this reaction, and the pyruvate is formed at the N-terminus of the alpha chain, which is derived from the carboxyl end of the proenzyme. The post-translation cleavage follows an unusual pathway, termed non-hydrolytic serinolysis, in which the side chain hydroxyl group of the serine supplies its oxygen atom to form the C-terminus of the beta chain, while the remainder of the serine residue undergoes an oxidative deamination to produce ammonia and the pyruvoyl group blocking the N-terminus of the alpha chain.

The enzyme catalyses S-adenosyl-L-methionine + H(+) = S-adenosyl 3-(methylsulfanyl)propylamine + CO2. It functions in the pathway amine and polyamine biosynthesis; S-adenosylmethioninamine biosynthesis; S-adenosylmethioninamine from S-adenosyl-L-methionine: step 1/1. Its function is as follows. Catalyzes the decarboxylation of S-adenosylmethionine to S-adenosylmethioninamine (dcAdoMet), the propylamine donor required for the synthesis of the polyamines spermine and spermidine from the diamine putrescine. This is S-adenosylmethionine decarboxylase proenzyme from Aquifex aeolicus (strain VF5).